Consider the following 261-residue polypeptide: Proteasome subunit beta type-2 (261 aa).

A propeptide spans 1–29 (MAGLSFDNYQRNNFLAENSHTQPKATSTG) (removed in mature form). The active-site Nucleophile is Thr-30.

Belongs to the peptidase T1B family. The 26S proteasome consists of a 20S proteasome core and two 19S regulatory subunits. The 20S proteasome core is composed of 28 subunits that are arranged in four stacked rings, resulting in a barrel-shaped structure. The two end rings are each formed by seven alpha subunits, and the two central rings are each formed by seven beta subunits. The catalytic chamber with the active sites is on the inside of the barrel.

It is found in the cytoplasm. The protein resides in the nucleus. It carries out the reaction Cleavage of peptide bonds with very broad specificity.. The proteasome degrades poly-ubiquitinated proteins in the cytoplasm and in the nucleus. It is essential for the regulated turnover of proteins and for the removal of misfolded proteins. The proteasome is a multicatalytic proteinase complex that is characterized by its ability to cleave peptides with Arg, Phe, Tyr, Leu, and Glu adjacent to the leaving group at neutral or slightly basic pH. It has an ATP-dependent proteolytic activity. This Saccharomyces cerevisiae (strain ATCC 204508 / S288c) (Baker's yeast) protein is Proteasome subunit beta type-2 (PUP1).